The primary structure comprises 355 residues: D-alanine--D-alanine ligase (355 aa).

In terms of domain architecture, ATP-grasp spans 143–350 (KKIFSHLEIP…IDQLVAKLVD (208 aa)). Residue 178–233 (IEKLKLPVFVKPANSGSSLGISKAKTRSEIIKALQKAWEIDSRIVIEEGLDVRELE) participates in ATP binding. Asp-303, Glu-317, and Asn-319 together coordinate Mg(2+).

It belongs to the D-alanine--D-alanine ligase family. Requires Mg(2+) as cofactor. Mn(2+) is required as a cofactor.

The protein localises to the cytoplasm. It catalyses the reaction 2 D-alanine + ATP = D-alanyl-D-alanine + ADP + phosphate + H(+). Its pathway is cell wall biogenesis; peptidoglycan biosynthesis. In terms of biological role, cell wall formation. The sequence is that of D-alanine--D-alanine ligase from Prochlorococcus marinus subsp. pastoris (strain CCMP1986 / NIES-2087 / MED4).